Reading from the N-terminus, the 103-residue chain is Large ribosomal subunit protein bL21 (103 aa).

This sequence belongs to the bacterial ribosomal protein bL21 family. As to quaternary structure, part of the 50S ribosomal subunit. Contacts protein L20.

This protein binds to 23S rRNA in the presence of protein L20. This Chloroflexus aurantiacus (strain ATCC 29364 / DSM 637 / Y-400-fl) protein is Large ribosomal subunit protein bL21.